Consider the following 209-residue polypeptide: Ribose 1,5-bisphosphate phosphokinase PhnN (209 aa).

ATP is bound at residue Gly27 to Asp34.

It belongs to the ribose 1,5-bisphosphokinase family.

It catalyses the reaction alpha-D-ribose 1,5-bisphosphate + ATP = 5-phospho-alpha-D-ribose 1-diphosphate + ADP. Its pathway is metabolic intermediate biosynthesis; 5-phospho-alpha-D-ribose 1-diphosphate biosynthesis; 5-phospho-alpha-D-ribose 1-diphosphate from D-ribose 5-phosphate (route II): step 3/3. Functionally, catalyzes the phosphorylation of ribose 1,5-bisphosphate to 5-phospho-D-ribosyl alpha-1-diphosphate (PRPP). This Chelativorans sp. (strain BNC1) protein is Ribose 1,5-bisphosphate phosphokinase PhnN.